Consider the following 48-residue polypeptide: Disintegrin accutin (48 aa).

A Pyrrolidone carboxylic acid modification is found at Q1. One can recognise a Disintegrin domain in the interval 1 to 48; sequence QGAQCTAGPCCWPCKFLKEGTICRRARGDDLDDYCNGISADCPRNPYY. Disulfide bonds link C5–C11, C10–C35, and C23–C42. A Cell attachment site motif is present at residues 27–29; the sequence is RGD.

This sequence belongs to the venom metalloproteinase (M12B) family. P-II subfamily. P-IIa sub-subfamily. Monomer (disintegrin). As to expression, expressed by the venom gland.

It localises to the secreted. Its function is as follows. Inhibit human platelet aggregation induced by ADP, collagen, thrombin or the thromboxane analog U46619 in platelet suspension with IC(50) values of 66-267 nM. Acts by inhibiting fibrinogen interaction with platelet receptors GPIIb/GPIIIa (ITGA2B/ITGB3). It also inhibits angiogenesis in vivo and in vitro by blocking integrin alpha-V/beta-3 (ITGAV/ITGB3) of endothelial cells and by inducing apoptosis. This chain is Disintegrin accutin, found in Deinagkistrodon acutus (Hundred-pace snake).